Here is a 316-residue protein sequence, read N- to C-terminus: Biotin synthase (316 aa).

In terms of domain architecture, Radical SAM core spans 42-268 (LCGESVDLCT…INPTAYIRMA (227 aa)). C60, C64, and C67 together coordinate [4Fe-4S] cluster. 4 residues coordinate [2Fe-2S] cluster: S104, C136, C196, and R266.

Belongs to the radical SAM superfamily. Biotin synthase family. As to quaternary structure, homodimer. [4Fe-4S] cluster serves as cofactor. [2Fe-2S] cluster is required as a cofactor.

It catalyses the reaction (4R,5S)-dethiobiotin + (sulfur carrier)-SH + 2 reduced [2Fe-2S]-[ferredoxin] + 2 S-adenosyl-L-methionine = (sulfur carrier)-H + biotin + 2 5'-deoxyadenosine + 2 L-methionine + 2 oxidized [2Fe-2S]-[ferredoxin]. Its pathway is cofactor biosynthesis; biotin biosynthesis; biotin from 7,8-diaminononanoate: step 2/2. In terms of biological role, catalyzes the conversion of dethiobiotin (DTB) to biotin by the insertion of a sulfur atom into dethiobiotin via a radical-based mechanism. This is Biotin synthase from Clostridium beijerinckii (strain ATCC 51743 / NCIMB 8052) (Clostridium acetobutylicum).